Here is a 223-residue protein sequence, read N- to C-terminus: Small ribosomal subunit protein uS3 (223 aa).

Positions 38-106 (LKAELKEKLK…EVYIDIQEVH (69 aa)) constitute a KH type-2 domain.

The protein belongs to the universal ribosomal protein uS3 family. Part of the 30S ribosomal subunit. Forms a tight complex with proteins S10 and S14.

Functionally, binds the lower part of the 30S subunit head. Binds mRNA in the 70S ribosome, positioning it for translation. This chain is Small ribosomal subunit protein uS3, found in Koribacter versatilis (strain Ellin345).